Consider the following 446-residue polypeptide: Glucose-6-phosphate isomerase (446 aa).

E288 serves as the catalytic Proton donor. Residues H309 and K423 contribute to the active site.

Belongs to the GPI family.

It is found in the cytoplasm. It catalyses the reaction alpha-D-glucose 6-phosphate = beta-D-fructose 6-phosphate. It functions in the pathway carbohydrate biosynthesis; gluconeogenesis. Its pathway is carbohydrate degradation; glycolysis; D-glyceraldehyde 3-phosphate and glycerone phosphate from D-glucose: step 2/4. Catalyzes the reversible isomerization of glucose-6-phosphate to fructose-6-phosphate. The chain is Glucose-6-phosphate isomerase from Lacticaseibacillus casei (strain BL23) (Lactobacillus casei).